The following is a 525-amino-acid chain: Nuclear pore glycoprotein p62 (525 aa).

Ser2 is modified (N-acetylserine). 5 tandem repeats follow at residues 6 to 7, 46 to 47, 78 to 79, 115 to 116, and 143 to 144. Positions 6-144 are 5 X 2 AA repeats of F-G; that stretch reads FGGTGAPAGG…GTAPTGFVFG (139 aa). The tract at residues 260 to 293 is disordered; that stretch reads LKAPGAAPGASTTSTTTTTTTTTTTASTSSSTTT. Residues 269–293 are compositionally biased toward low complexity; it reads ASTTSTTTTTTTTTTTASTSSSTTT. Residues 331 to 461 are required for centrosome localization; that stretch reads MTYAQLESLI…QDLKDIIEHL (131 aa). Residues 331–461 are a coiled coil; sequence MTYAQLESLI…QDLKDIIEHL (131 aa). A phosphoserine mark is found at Ser411 and Ser421. Residue Ser471 is glycosylated (O-linked (GlcNAc) serine).

It belongs to the nucleoporin NSP1/NUP62 family. In terms of assembly, component of the p62 complex, a complex at least composed of NUP62, NUP54, and NUP58. Interacts with NUP88. Interacts with NUTF2. Interacts with HIKESHI. Interacts with OSBPL8. Interacts with CAPG. Interacts with SAS6 and TUBG1 at the centrosome. Interacts with MCM3AP. Post-translationally, the inner channel of the NPC has a different redox environment from the cytoplasm and allows the formation of interchain disulfide bonds between some nucleoporins, the significant increase of these linkages upon oxidative stress reduces the permeability of the NPC.

The protein resides in the nucleus. It localises to the nuclear pore complex. Its subcellular location is the cytoplasm. The protein localises to the cytoskeleton. It is found in the spindle pole. The protein resides in the nucleus envelope. It localises to the microtubule organizing center. Its subcellular location is the centrosome. Essential component of the nuclear pore complex. The N-terminal is probably involved in nucleocytoplasmic transport. The C-terminal is involved in protein-protein interaction probably via coiled-coil formation, promotes its association with centrosomes and may function in anchorage of p62 to the pore complex. Plays a role in mitotic cell cycle progression by regulating centrosome segregation, centriole maturation and spindle orientation. It might be involved in protein recruitment to the centrosome after nuclear breakdown. The polypeptide is Nuclear pore glycoprotein p62 (Nup62) (Rattus norvegicus (Rat)).